A 518-amino-acid polypeptide reads, in one-letter code: Bifunctional methyltransferase (518 aa).

Residues 1 to 300 (MQYSIKQILN…SHNRVIEISP (300 aa)) are hemK. The tract at residues 1–302 (MQYSIKQILN…NRVIEISPIN (302 aa)) is RF MTase. Residues 140-144 (GTGSG), D163, W192, N207, E347, E372, N399, and D421 each bind S-adenosyl-L-methionine. 207–210 (NPPY) is a substrate binding site. The tRNA (guanine-N(7)-)-methyltransferase stretch occupies residues 301–518 (INLNRSYARR…MILQHALTGH (218 aa)). A tRNA MTase region spans residues 305–518 (RSYARRIGKS…MILQHALTGH (214 aa)). Residue D421 is part of the active site. 2 residues coordinate substrate: K425 and D457.

The protein in the C-terminal section; belongs to the class I-like SAM-binding methyltransferase superfamily. TrmB family. In the N-terminal section; belongs to the protein N5-glutamine methyltransferase family. PrmC subfamily.

The enzyme catalyses L-glutaminyl-[peptide chain release factor] + S-adenosyl-L-methionine = N(5)-methyl-L-glutaminyl-[peptide chain release factor] + S-adenosyl-L-homocysteine + H(+). The catalysed reaction is guanosine(46) in tRNA + S-adenosyl-L-methionine = N(7)-methylguanosine(46) in tRNA + S-adenosyl-L-homocysteine. In terms of biological role, methylates the class 1 translation termination release factors RF1/PrfA and RF2/PrfB on the glutamine residue of the universally conserved GGQ motif. Its function is as follows. Catalyzes the formation of N(7)-methylguanine at position 46 (m7G46) in tRNA. This is Bifunctional methyltransferase (prmC/trmB) from Rickettsia typhi (strain ATCC VR-144 / Wilmington).